Reading from the N-terminus, the 422-residue chain is Serine hydroxymethyltransferase (422 aa).

(6S)-5,6,7,8-tetrahydrofolate is bound by residues L118 and 122 to 124 (GHL). K227 is subject to N6-(pyridoxal phosphate)lysine. E242 is a (6S)-5,6,7,8-tetrahydrofolate binding site.

Belongs to the SHMT family. As to quaternary structure, homodimer. The cofactor is pyridoxal 5'-phosphate.

The protein resides in the cytoplasm. It catalyses the reaction (6R)-5,10-methylene-5,6,7,8-tetrahydrofolate + glycine + H2O = (6S)-5,6,7,8-tetrahydrofolate + L-serine. The protein operates within one-carbon metabolism; tetrahydrofolate interconversion. It functions in the pathway amino-acid biosynthesis; glycine biosynthesis; glycine from L-serine: step 1/1. Its function is as follows. Catalyzes the reversible interconversion of serine and glycine with tetrahydrofolate (THF) serving as the one-carbon carrier. This reaction serves as the major source of one-carbon groups required for the biosynthesis of purines, thymidylate, methionine, and other important biomolecules. Also exhibits THF-independent aldolase activity toward beta-hydroxyamino acids, producing glycine and aldehydes, via a retro-aldol mechanism. The protein is Serine hydroxymethyltransferase of Sulfurihydrogenibium sp. (strain YO3AOP1).